The following is a 164-amino-acid chain: Endoribonuclease YbeY (164 aa).

3 residues coordinate Zn(2+): His117, His121, and His127.

It belongs to the endoribonuclease YbeY family. Requires Zn(2+) as cofactor.

It localises to the cytoplasm. Single strand-specific metallo-endoribonuclease involved in late-stage 70S ribosome quality control and in maturation of the 3' terminus of the 16S rRNA. The sequence is that of Endoribonuclease YbeY from Mycoplasma capricolum subsp. capricolum (strain California kid / ATCC 27343 / NCTC 10154).